The primary structure comprises 220 residues: MRTLTCVPDESTAKVHTCRAPFMLHRVMIPPDPIQRFAELFERAKQAIAVDPNAMVVATVGDDGRPSARVVLLKDFDARGFVFYTNHESRKGREARAHPYAALCFYWQPLNEQVRVEGRVERVTDAEADAYFQSRARGSQVGAWASLQSQPLATREELEARVAEVEQKYAGQPVPRPPHWSGFRVVPDRIEFWHAQESRLHDRHVYLREDGGWRTQMLYP.

FMN is bound by residues 69 to 74 (RVVLLK), 84 to 85 (YT), Arg-90, Lys-91, and Gln-113. Lys-74 contacts substrate. Substrate-binding residues include Tyr-131, Arg-135, and Ser-139. Residues 148 to 149 (QS) and Trp-193 contribute to the FMN site. 199 to 201 (RLH) is a substrate binding site. Arg-203 is an FMN binding site.

Belongs to the pyridoxamine 5'-phosphate oxidase family. In terms of assembly, homodimer. FMN is required as a cofactor.

The enzyme catalyses pyridoxamine 5'-phosphate + O2 + H2O = pyridoxal 5'-phosphate + H2O2 + NH4(+). It catalyses the reaction pyridoxine 5'-phosphate + O2 = pyridoxal 5'-phosphate + H2O2. It functions in the pathway cofactor metabolism; pyridoxal 5'-phosphate salvage; pyridoxal 5'-phosphate from pyridoxamine 5'-phosphate: step 1/1. It participates in cofactor metabolism; pyridoxal 5'-phosphate salvage; pyridoxal 5'-phosphate from pyridoxine 5'-phosphate: step 1/1. Catalyzes the oxidation of either pyridoxine 5'-phosphate (PNP) or pyridoxamine 5'-phosphate (PMP) into pyridoxal 5'-phosphate (PLP). The chain is Pyridoxine/pyridoxamine 5'-phosphate oxidase from Myxococcus xanthus.